A 112-amino-acid chain; its full sequence is T cell receptor alpha variable 9-1 (112 aa).

The signal sequence occupies residues 1–20 (MNSSPGPAIALFLMFGGING). The Ig-like domain occupies 21-112 (DSVVQTEGQV…DSAVYFCALS (92 aa)). The N-linked (GlcNAc...) asparagine glycan is linked to Asn41. The cysteines at positions 42 and 109 are disulfide-linked.

Alpha-beta TR is a heterodimer composed of an alpha and beta chain; disulfide-linked. The alpha-beta TR is associated with the transmembrane signaling CD3 coreceptor proteins to form the TR-CD3 (TcR or TCR). The assembly of alpha-beta TR heterodimers with CD3 occurs in the endoplasmic reticulum where a single alpha-beta TR heterodimer associates with one CD3D-CD3E heterodimer, one CD3G-CD3E heterodimer and one CD247 homodimer forming a stable octameric structure. CD3D-CD3E and CD3G-CD3E heterodimers preferentially associate with TR alpha and TR beta chains, respectively. The association of the CD247 homodimer is the last step of TcR assembly in the endoplasmic reticulum and is required for transport to the cell surface.

The protein resides in the cell membrane. V region of the variable domain of T cell receptor (TR) alpha chain that participates in the antigen recognition. Alpha-beta T cell receptors are antigen specific receptors which are essential to the immune response and are present on the cell surface of T lymphocytes. Recognize peptide-major histocompatibility (MH) (pMH) complexes that are displayed by antigen presenting cells (APC), a prerequisite for efficient T cell adaptive immunity against pathogens. Binding of alpha-beta TR to pMH complex initiates TR-CD3 clustering on the cell surface and intracellular activation of LCK that phosphorylates the ITAM motifs of CD3G, CD3D, CD3E and CD247 enabling the recruitment of ZAP70. In turn ZAP70 phosphorylates LAT, which recruits numerous signaling molecules to form the LAT signalosome. The LAT signalosome propagates signal branching to three major signaling pathways, the calcium, the mitogen-activated protein kinase (MAPK) kinase and the nuclear factor NF-kappa-B (NF-kB) pathways, leading to the mobilization of transcription factors that are critical for gene expression and essential for T cell growth and differentiation. The T cell repertoire is generated in the thymus, by V-(D)-J rearrangement. This repertoire is then shaped by intrathymic selection events to generate a peripheral T cell pool of self-MH restricted, non-autoaggressive T cells. Post-thymic interaction of alpha-beta TR with the pMH complexes shapes TR structural and functional avidity. The protein is T cell receptor alpha variable 9-1 of Homo sapiens (Human).